Consider the following 628-residue polypeptide: Phosphomethylpyrimidine synthase (628 aa).

Residues N225, M254, Y283, H319, 339 to 341 (SRG), 380 to 383 (DGLR), and E419 contribute to the substrate site. H423 provides a ligand contact to Zn(2+). Y446 provides a ligand contact to substrate. Residue H487 participates in Zn(2+) binding. [4Fe-4S] cluster contacts are provided by C567, C570, and C575.

Belongs to the ThiC family. Homodimer. It depends on [4Fe-4S] cluster as a cofactor.

It catalyses the reaction 5-amino-1-(5-phospho-beta-D-ribosyl)imidazole + S-adenosyl-L-methionine = 4-amino-2-methyl-5-(phosphooxymethyl)pyrimidine + CO + 5'-deoxyadenosine + formate + L-methionine + 3 H(+). It participates in cofactor biosynthesis; thiamine diphosphate biosynthesis. In terms of biological role, catalyzes the synthesis of the hydroxymethylpyrimidine phosphate (HMP-P) moiety of thiamine from aminoimidazole ribotide (AIR) in a radical S-adenosyl-L-methionine (SAM)-dependent reaction. The protein is Phosphomethylpyrimidine synthase of Leptothrix cholodnii (strain ATCC 51168 / LMG 8142 / SP-6) (Leptothrix discophora (strain SP-6)).